Reading from the N-terminus, the 311-residue chain is Homoserine kinase (311 aa).

Residue 89-99 (PFARGLGSSAT) coordinates ATP.

The protein belongs to the GHMP kinase family. Homoserine kinase subfamily.

Its subcellular location is the cytoplasm. It catalyses the reaction L-homoserine + ATP = O-phospho-L-homoserine + ADP + H(+). The protein operates within amino-acid biosynthesis; L-threonine biosynthesis; L-threonine from L-aspartate: step 4/5. In terms of biological role, catalyzes the ATP-dependent phosphorylation of L-homoserine to L-homoserine phosphate. This is Homoserine kinase from Halothermothrix orenii (strain H 168 / OCM 544 / DSM 9562).